The sequence spans 742 residues: Kanadaptin (742 aa).

A compositionally biased stretch (polar residues) spans 1-16 (MADILSQSETLASQDL). The disordered stretch occupies residues 1-112 (MADILSQSET…PPWGGPATAP (112 aa)). Residues 27 to 43 (VSPAARSKAPASSSSNP) show a composition bias toward low complexity. Ser-28 is subject to Phosphoserine. The span at 72 to 82 (GDFRSLQEEQS) shows a compositional bias: basic and acidic residues. Ser-90 carries the post-translational modification Phosphoserine. Positions 96 to 106 (RAPPYQEPPWG) are enriched in pro residues. The region spanning 135-195 (CLFGRLSGCD…HGTFLNKTRI (61 aa)) is the FHA domain. Positions 254-282 (LGEDSDEEEEMDTSERKINAGSQDDEMGC) are disordered. The span at 256–265 (EDSDEEEEMD) shows a compositional bias: acidic residues. A phosphoserine mark is found at Ser-258 and Ser-412. Lys-441 participates in a covalent cross-link: Glycyl lysine isopeptide (Lys-Gly) (interchain with G-Cter in SUMO2). A coiled-coil region spans residues 443–476 (ETFESLVAKLNDAERELSEISERLKASSQVLSES). Ser-476 is modified (phosphoserine). A disordered region spans residues 565–742 (LKTGTVGKLP…RTHLNDKYGY (178 aa)). Acidic residues predominate over residues 591–606 (PEVEEEEEEEEEEEKE). Residues 607 to 619 (KEEHEKKKLEDGS) show a composition bias toward basic and acidic residues. A phosphoserine mark is found at Ser-655 and Ser-658. A compositionally biased stretch (low complexity) spans 699-708 (PGPGKLPPTL). Residues 732 to 742 (GRTHLNDKYGY) show a composition bias toward basic and acidic residues.

Ubiquitously expressed.

Its subcellular location is the nucleus. It is found in the cytoplasm. This is Kanadaptin (SLC4A1AP) from Homo sapiens (Human).